The sequence spans 140 residues: Calcium-binding protein B (140 aa).

EF-hand domains follow at residues 38–73 (ATLS…INQP) and 74–109 (KTYL…KTSS). D51, N53, S55, D57, and E62 together coordinate Ca(2+).

The sequence is that of Calcium-binding protein B (cbpB) from Dictyostelium discoideum (Social amoeba).